The chain runs to 508 residues: Probable cytosol aminopeptidase (508 aa).

Mn(2+)-binding residues include Lys-274 and Asp-279. Residue Lys-286 is part of the active site. Mn(2+) contacts are provided by Asp-297, Asp-356, and Glu-358. Arg-360 is a catalytic residue.

Belongs to the peptidase M17 family. Mn(2+) is required as a cofactor.

The protein resides in the cytoplasm. It carries out the reaction Release of an N-terminal amino acid, Xaa-|-Yaa-, in which Xaa is preferably Leu, but may be other amino acids including Pro although not Arg or Lys, and Yaa may be Pro. Amino acid amides and methyl esters are also readily hydrolyzed, but rates on arylamides are exceedingly low.. The catalysed reaction is Release of an N-terminal amino acid, preferentially leucine, but not glutamic or aspartic acids.. Its function is as follows. Presumably involved in the processing and regular turnover of intracellular proteins. Catalyzes the removal of unsubstituted N-terminal amino acids from various peptides. This is Probable cytosol aminopeptidase from Cutibacterium acnes (strain DSM 16379 / KPA171202) (Propionibacterium acnes).